The sequence spans 96 residues: Large ribosomal subunit protein bL27 (96 aa).

The disordered stretch occupies residues 13–33 (KGGGSTANGRNSAGRRLGAKA).

This sequence belongs to the bacterial ribosomal protein bL27 family.

The sequence is that of Large ribosomal subunit protein bL27 from Lactobacillus acidophilus (strain ATCC 700396 / NCK56 / N2 / NCFM).